Here is a 199-residue protein sequence, read N- to C-terminus: MANRGPSYGLSREVQEKIEQKYDADLENKLVDWIILQCAEDIEHPPPGRAHFQKWLMDGTVLCKLINSLYPPGQEPIPKISESKMAFKQMEQISQFLKAAEIYGVRTTDIFQTVDLWEGKDMAAVQRTLMALGSVAVTKDDGCYRGEPSWFHRKAQQNRRGFSEEQLRQGQNVIGLQMGSNKGASQAGMTGYGMPRQIM.

One can recognise a Calponin-homology (CH) domain in the interval 24–136 (ADLENKLVDW…RTLMALGSVA (113 aa)). Position 163 is a phosphoserine (Ser-163). The stretch at 174 to 199 (IGLQMGSNKGASQAGMTGYGMPRQIM) is one Calponin-like repeat. The span at 178 to 188 (MGSNKGASQAG) shows a compositional bias: polar residues. The disordered stretch occupies residues 178-199 (MGSNKGASQAGMTGYGMPRQIM).

It belongs to the calponin family.

In Bos taurus (Bovine), this protein is Transgelin-3 (TAGLN3).